Here is a 400-residue protein sequence, read N- to C-terminus: Large envelope protein (400 aa).

N-acetylmethionine is present on Met1. Gly2 carries N-myristoyl glycine; by host lipidation. Positions 2 to 119 (GGRLPKPRKG…PPLRDSHPQA (118 aa)) are pre-S1. The tract at residues 2-174 (GGRLPKPRKG…SSRIGDPAPT (173 aa)) is pre-S. Residues 2 to 181 (GGRLPKPRKG…APTMENITSG (180 aa)) lie on the Virion surface; in external conformation side of the membrane. The Intravirion; in internal conformation segment spans residues 2 to 253 (GGRLPKPRKG…PGYRWMCLRR (252 aa)). A glycan (N-linked (GlcNAc...) asparagine) is linked at Arg4. Residues 84–116 (TLTTVPAVPPPASTNRQSGRQPTPISPPLRDSH) form a disordered region. Residues 96 to 106 (STNRQSGRQPT) show a composition bias toward polar residues. The pre-S2 stretch occupies residues 120–174 (MQWNSTKFHQTLQDPRVRGLYFPAGGSSSGTVNPAPNIASHISSISSRIGDPAPT). The helical transmembrane segment at 182–202 (FLGPLLVLQAGFFLLTRILTI) threads the bilayer. The Intravirion; in external conformation portion of the chain corresponds to 203–253 (PQSLDSWWTSLNFLGEAPVCLGQNSQSPTSNHSPTSCPPICPGYRWMCLRR). The helical transmembrane segment at 254–274 (FIIFLFILLLCLIFLLVLLDC) threads the bilayer. Residues 275 to 348 (QGMLPVCPLI…WASVRFSWLS (74 aa)) are Virion surface-facing. N-linked (GlcNAc...) asparagine; by host glycosylation occurs at Asn320. A helical membrane pass occupies residues 349–369 (LLVPFVQWFVGLSPTVWLSVI). The Intravirion segment spans residues 370–375 (WMMWYW). The chain crosses the membrane as a helical span at residues 376 to 398 (GPSLYNILSPFIPLLPIFFCLWV). The Virion surface portion of the chain corresponds to 399-400 (YI).

It belongs to the orthohepadnavirus major surface antigen family. In terms of assembly, in its internal form (Li-HBsAg), interacts with the capsid protein and with the isoform S. Interacts with host chaperone CANX. As to quaternary structure, associates with host chaperone CANX through its pre-S2 N glycan; this association may be essential for isoform M proper secretion. Interacts with isoform L. Interacts with the antigens of satellite virus HDV (HDVAgs); this interaction is required for encapsidation of HDV genomic RNA. Post-translationally, isoform M is N-terminally acetylated by host at a ratio of 90%, and N-glycosylated by host at the pre-S2 region. Myristoylated.

The protein resides in the virion membrane. The large envelope protein exists in two topological conformations, one which is termed 'external' or Le-HBsAg and the other 'internal' or Li-HBsAg. In its external conformation the protein attaches the virus to cell receptors and thereby initiating infection. This interaction determines the species specificity and liver tropism. This attachment induces virion internalization predominantly through caveolin-mediated endocytosis. The large envelope protein also assures fusion between virion membrane and endosomal membrane. In its internal conformation the protein plays a role in virion morphogenesis and mediates the contact with the nucleocapsid like a matrix protein. In terms of biological role, the middle envelope protein plays an important role in the budding of the virion. It is involved in the induction of budding in a nucleocapsid independent way. In this process the majority of envelope proteins bud to form subviral lipoprotein particles of 22 nm of diameter that do not contain a nucleocapsid. In Hepatitis B virus genotype A3 (isolate Cameroon/CMR711/1994) (HBV-A), this protein is Large envelope protein.